A 605-amino-acid polypeptide reads, in one-letter code: Granule-bound starch synthase 1, chloroplastic/amyloplastic (605 aa).

The transit peptide at 1–72 (MAALATSQLV…GGRFPSLVVC (72 aa)) directs the protein to the chloroplast. ADP-alpha-D-glucose is bound at residue lysine 91.

It belongs to the glycosyltransferase 1 family. Bacterial/plant glycogen synthase subfamily.

The protein resides in the plastid. The protein localises to the chloroplast. Its subcellular location is the amyloplast. The enzyme catalyses an NDP-alpha-D-glucose + [(1-&gt;4)-alpha-D-glucosyl](n) = [(1-&gt;4)-alpha-D-glucosyl](n+1) + a ribonucleoside 5'-diphosphate + H(+). Its pathway is glycan biosynthesis; starch biosynthesis. In terms of biological role, required for the synthesis of amylose in endosperm. This chain is Granule-bound starch synthase 1, chloroplastic/amyloplastic (WAXY), found in Zea mays (Maize).